We begin with the raw amino-acid sequence, 1506 residues long: DDB1- and CUL4-associated factor 1 (1506 aa).

The interval 141–499 is protein kinase-like; sequence QPLRTYSTGL…STLEILNLED (359 aa). 2 positions are modified to phosphoserine: serine 202 and serine 254. Positions 241–275 are disordered; it reads RLDSSHKTSSRVNSATKPEEGGLKKNKSAKHGDRE. Residues 561–592 form the Chromo domain; the sequence is SYTHEQIVEMMEFLIEYGPAQLYWEPAEVFLK. Lysine 700 bears the N6-acetyllysine mark. The residue at position 827 (serine 827) is a Phosphoserine. A LisH domain is found at 845–877; it reads PEKELLLLIRNHLISKGLGETATVLTREADLPM. Threonine 887 carries the phosphothreonine modification. 2 positions are modified to phosphoserine: serine 894 and serine 897. Disordered regions lie at residues 916–946 and 977–999; these read ATVG…GPSY and KSDH…HLPS. Residues 924 to 943 show a composition bias toward pro residues; the sequence is SAPPAHPPPRPPQGSLPLPG. Serine 978 and serine 999 each carry phosphoserine. WD repeat units follow at residues 1090–1129, 1132–1173, 1175–1212, 1214–1246, and 1247–1289; these read EDES…EEAS, CHNS…DMKH, FTED…KLLT, FNPD…WDVR, and SAQA…LLHT. Positions 1090-1289 are WD repeat-like region; that stretch reads EDESGFTCCA…DLRTFHLLHT (200 aa). 2 consecutive short sequence motifs (DWD box) follow at residues 1241–1248 and 1277–1284; these read VLWDVRSA and EIWDLRTF. A Phosphoserine modification is found at serine 1327. The segment at 1392 to 1506 is disordered; it reads RLAEDEDEEE…EDDIILSLNE (115 aa). Composition is skewed to acidic residues over residues 1395-1482 and 1489-1500; these read EDED…EEVE and DSSDNSDLEDDI. The interaction with NF2 stretch occupies residues 1417–1506; that stretch reads DDDTDDLDEL…EDDIILSLNE (90 aa).

This sequence belongs to the VPRBP/DCAF1 family. In terms of assembly, component of the DCX (DDB1-CUL4-X-box) E3 ubiquitin-protein ligase complex, named CUL4A-RBX1-DDB1-DCAF1/VPRBP complex. Interacts with DDB1; the interaction is direct. Also forms a ternary complex with DDA1 and DDB1. Interacts with NF2 (via FERM domain). Component of the EDVP complex, a E3 ligase complex containing DYRK2, EDD/UBR5, DDB1 and DCAF1. Interacts with DYRK2; the interaction is direct. Interacts with RAG1; the interaction is direct. Interacts with LLGL1 and LLGL2. Interacts with histone H3. Interacts with ESR1 and LATS1; probably recruited by LATS1 to promote ESR1 ubiquitination and ubiquitin-mediated proteasomal degradation. Directly interacts with TET1, TET2 and TET3 (via C-terminus). Interacts with CEP78; promoting DCAF1 localization to centrosomes. As to expression, widely expressed. Expressed in oocytes and zygotes (at protein level).

Its subcellular location is the cytoplasm. The protein resides in the nucleus. It is found in the cytoskeleton. It localises to the microtubule organizing center. The protein localises to the centrosome. The enzyme catalyses L-seryl-[protein] + ATP = O-phospho-L-seryl-[protein] + ADP + H(+). The catalysed reaction is L-threonyl-[protein] + ATP = O-phospho-L-threonyl-[protein] + ADP + H(+). It participates in protein modification; protein ubiquitination. Functionally, acts both as a substrate recognition component of E3 ubiquitin-protein ligase complexes and as an atypical serine/threonine-protein kinase, playing key roles in various processes such as cell cycle, telomerase regulation and histone modification. Probable substrate-specific adapter of a DCX (DDB1-CUL4-X-box) E3 ubiquitin-protein ligase complex, named CUL4A-RBX1-DDB1-DCAF1/VPRBP complex, which mediates ubiquitination and proteasome-dependent degradation of proteins such as NF2. Involved in the turnover of methylated proteins: recognizes and binds methylated proteins via its chromo domain, leading to ubiquitination of target proteins by the RBX1-DDB1-DCAF1/VPRBP complex. The CUL4A-RBX1-DDB1-DCAF1/VPRBP complex is also involved in B-cell development: DCAF1 is recruited by RAG1 to ubiquitinate proteins, leading to limit error-prone repair during V(D)J recombination. Also part of the EDVP complex, an E3 ligase complex that mediates ubiquitination of proteins such as TERT, leading to TERT degradation and telomerase inhibition. The EDVP complex also mediates ubiquitination and degradation of CCP110. Also acts as an atypical serine/threonine-protein kinase that specifically mediates phosphorylation of 'Thr-120' of histone H2A (H2AT120ph) in a nucleosomal context, thereby repressing transcription. H2AT120ph is present in the regulatory region of many tumor suppresor genes, down-regulates their transcription and is present at high level in a number of tumors. Involved in JNK-mediated apoptosis during cell competition process via its interaction with LLGL1 and LLGL2. By acting on TET dioxygenses, essential for oocyte maintenance at the primordial follicle stage, hence essential for female fertility. The polypeptide is DDB1- and CUL4-associated factor 1 (Mus musculus (Mouse)).